Reading from the N-terminus, the 183-residue chain is MAASVAWGGVNAGFLLRAARGAWWSRPGGFWGSGEAAAPAIARKFRATGSRPAGEEEAGGPERPGDVVNVVFVDRSGQRIPVSGRVGDNVLHLAQRHGLDLEGACEASLACSTCHVYVSEDHLDLLPPPDEREDDMLDMAPLLQENSRLGCQIVLTPELEGAEFTLPKITRNFYVDGHVPKPH.

Residues 1 to 52 constitute a mitochondrion transit peptide; it reads MAASVAWGGVNAGFLLRAARGAWWSRPGGFWGSGEAAAPAIARKFRATGSRP. The 2Fe-2S ferredoxin-type domain occupies 68-170; that stretch reads VNVVFVDRSG…GAEFTLPKIT (103 aa). [2Fe-2S] cluster is bound by residues Cys-105, Cys-111, Cys-114, and Cys-151.

The protein belongs to the adrenodoxin/putidaredoxin family. As to quaternary structure, component of the mitochondrial core iron-sulfur cluster (ISC) complex composed of NFS1, LYRM4, NDUFAB1, ISCU, FXN, and FDX2; this complex is a heterohexamer containing two copies of each monomer. Form a heterodimer complex with NFS1. Interacts (in both their reduced and oxidized states) with the cysteine desulfurase (NFS1:LYRM4) complex; this interaction stimulates cysteine desulfurase activity, and serves as a reductant for Fe-S cluster assembly. The cofactor is [2Fe-2S] cluster.

It is found in the mitochondrion. Its subcellular location is the mitochondrion matrix. Functionally, electron donor, of the core iron-sulfur cluster (ISC) assembly complex, that acts to reduce the persulfide into sulfide during [2Fe-2S] clusters assembly on the scaffolding protein ISCU. The core iron-sulfur cluster (ISC) assembly complex is involved in the de novo synthesis of a [2Fe-2S] cluster, the first step of the mitochondrial iron-sulfur protein biogenesis. This process is initiated by the cysteine desulfurase complex (NFS1:LYRM4:NDUFAB1) that produces persulfide which is delivered on the scaffold protein ISCU in a FXN-dependent manner. Then this complex is stabilized by FDX2 which provides reducing equivalents to accomplish the [2Fe-2S] cluster assembly. Finally, the [2Fe-2S] cluster is transferred from ISCU to chaperone proteins, including HSCB, HSPA9 and GLRX5. Essential for coenzyme Q biosynthesis: together with FDXR, transfers the electrons required for the hydroxylation reaction performed by COQ6. In Bos taurus (Bovine), this protein is Ferredoxin-2, mitochondrial.